The chain runs to 73 residues: Translation initiation factor IF-1 (73 aa).

The region spanning 1–72 (MAKDEIIEFE…SKGRITYRGK (72 aa)) is the S1-like domain.

Belongs to the IF-1 family. As to quaternary structure, component of the 30S ribosomal translation pre-initiation complex which assembles on the 30S ribosome in the order IF-2 and IF-3, IF-1 and N-formylmethionyl-tRNA(fMet); mRNA recruitment can occur at any time during PIC assembly.

It localises to the cytoplasm. Its function is as follows. One of the essential components for the initiation of protein synthesis. Stabilizes the binding of IF-2 and IF-3 on the 30S subunit to which N-formylmethionyl-tRNA(fMet) subsequently binds. Helps modulate mRNA selection, yielding the 30S pre-initiation complex (PIC). Upon addition of the 50S ribosomal subunit IF-1, IF-2 and IF-3 are released leaving the mature 70S translation initiation complex. This Psychrobacter arcticus (strain DSM 17307 / VKM B-2377 / 273-4) protein is Translation initiation factor IF-1.